A 560-amino-acid polypeptide reads, in one-letter code: Beta-glucosidase 26, peroxisomal (560 aa).

A beta-D-glucoside is bound by residues Gln-33, His-137, 182–183 (NE), Tyr-326, Glu-398, Trp-450, 457–458 (EW), and Tyr-466. Glu-183 serves as the catalytic Proton donor. Catalysis depends on Glu-398, which acts as the Nucleophile.

Belongs to the glycosyl hydrolase 1 family.

The protein localises to the peroxisome. It catalyses the reaction Hydrolysis of terminal, non-reducing beta-D-glucosyl residues with release of beta-D-glucose.. In terms of biological role, possesses beta-glucosidase activity toward 4-methyl-umbelliferyl-beta-D-glucoside in vitro. Possesses myrosinase activity toward indol-3-yl-methylglucosinolate (I3M) and 4-methoxy-indol-3-yl-methylglucosinolate (4MO-I3M) in vivo. Component of an inducible preinvasion resistance mechanism that prevents penetration of the nonhost fungal species B.graminis and E.pisi. Involved in indole glucosinolate (IGS) activation during pattern-triggered immunity (PTI). Functions as a myrosinase for the breakdown of flg22-triggered IGS. Required for both callose deposition and glucosinolate activation during pathogen-triggered resistance. During fungal attack, required for IGS activation that mediates broad-spectrum antifungal defense. This chain is Beta-glucosidase 26, peroxisomal, found in Arabidopsis thaliana (Mouse-ear cress).